The sequence spans 149 residues: Glutamyl-tRNA(Gln) amidotransferase subunit C, mitochondrial (149 aa).

The N-terminal 25 residues, 1–25, are a transit peptide targeting the mitochondrion; sequence MNHLHRLFRITQVDRPVLLAITRRL.

Belongs to the GatC family. In terms of assembly, subunit of the heterotrimeric GatCAB amidotransferase (AdT) complex, composed of A, B and C subunits.

Its subcellular location is the mitochondrion. The enzyme catalyses L-glutamyl-tRNA(Gln) + L-glutamine + ATP + H2O = L-glutaminyl-tRNA(Gln) + L-glutamate + ADP + phosphate + H(+). Its function is as follows. Allows the formation of correctly charged Gln-tRNA(Gln) through the transamidation of misacylated Glu-tRNA(Gln) in the mitochondria. The reaction takes place in the presence of glutamine and ATP through an activated gamma-phospho-Glu-tRNA(Gln). The protein is Glutamyl-tRNA(Gln) amidotransferase subunit C, mitochondrial of Branchiostoma floridae (Florida lancelet).